Reading from the N-terminus, the 226-residue chain is MRIVFDLGGSVVMPKEGAKAEKIMEYANIFKKIKDEGHEVAIVVGGGKTAREYIEIGRELGASESFCDELGIMATRMNAMILITALGDYSIKKVPTSFEEAELILNLGKIPVMGGTHPGHTTDAVAASLAEFINADLLVIGTNVDGVYDKDPNKYEDAKKFDKMSAKELVDLAISSSLKAGSSSVVDLLAAKIIERAKLKVAVVKGTPEELLNVSKGIINGTIIEG.

9–10 (GS) contacts ATP. Residue Gly-46 participates in UMP binding. ATP contacts are provided by Gly-47 and Arg-51. UMP-binding positions include Asp-68 and 116–122 (THPGHTT). Thr-142, Asn-143, Tyr-148, and Asp-151 together coordinate ATP.

Belongs to the UMP kinase family. In terms of assembly, homohexamer.

It localises to the cytoplasm. It catalyses the reaction UMP + ATP = UDP + ADP. Its pathway is pyrimidine metabolism; CTP biosynthesis via de novo pathway; UDP from UMP (UMPK route): step 1/1. Its activity is regulated as follows. Inhibited by UTP. Functionally, catalyzes the reversible phosphorylation of UMP to UDP. This chain is Uridylate kinase, found in Methanocaldococcus jannaschii (strain ATCC 43067 / DSM 2661 / JAL-1 / JCM 10045 / NBRC 100440) (Methanococcus jannaschii).